A 421-amino-acid polypeptide reads, in one-letter code: 2',3'-cyclic-nucleotide 3'-phosphodiesterase (421 aa).

Phosphoserine occurs at positions 6 and 9. Tyr-110 bears the Phosphotyrosine mark. At Ser-170 the chain carries Phosphoserine. The active-site Proton acceptor is His-251. Substrate is bound at residue Thr-253. Residue His-330 is the Proton donor of the active site. Thr-332 is a substrate binding site. Ser-359 carries the phosphoserine modification. Cysteine methyl ester is present on Cys-418. Cys-418 carries S-farnesyl cysteine lipidation. A propeptide spans 419–421 (TII) (removed in mature form).

The protein belongs to the 2H phosphoesterase superfamily. CNPase family. As to quaternary structure, exists as monomers and homodimers.

The protein localises to the membrane. Its subcellular location is the melanosome. The enzyme catalyses a nucleoside 2',3'-cyclic phosphate + H2O = a nucleoside 2'-phosphate + H(+). Its function is as follows. Catalyzes the formation of 2'-nucleotide products from 2',3'-cyclic substrates. May participate in RNA metabolism in the myelinating cell, CNP is the third most abundant protein in central nervous system myelin. This is 2',3'-cyclic-nucleotide 3'-phosphodiesterase from Pongo abelii (Sumatran orangutan).